A 156-amino-acid chain; its full sequence is Putative increased recombination centers protein 11 (156 aa).

A helical transmembrane segment spans residues 20 to 42 (AALGATCLLHYLTTSLSIRFFFH).

It localises to the membrane. This Saccharomyces cerevisiae (strain ATCC 204508 / S288c) (Baker's yeast) protein is Putative increased recombination centers protein 11 (IRC11).